Consider the following 317-residue polypeptide: MMQPNAKLLSPSAKFLPSPIEPPQHNRRTTVGAPPSLERNCKLSRRNLSKSSLLLLLTTQTTLTPLLDFSKAQADTIANPNLTNCENRIPTKKAFIDVSIDGEPIGRIIIGLYGDDVPAGTARFSSIVSGKAGITYRRKDFVKIMPGYVQHGGIRSYGVDAERATAAVGSLQNLIEEWERGKRGEICNVNKAGSVGIVVRDPSKPPPKTKLVARNGKLVVEEEVIAVGPNGTEFVITAVDSPELEDSVLVIGKVLEGMGVVEKMREVKTVRDNTSSPYFRVAKVIGDKRAVVAERGFNRPYSKVVVTNCGLIESQTL.

Positions 1–37 (MMQPNAKLLSPSAKFLPSPIEPPQHNRRTTVGAPPSL) are disordered. Residues 95 to 311 (FIDVSIDGEP…SKVVVTNCGL (217 aa)) enclose the PPIase cyclophilin-type domain.

Belongs to the cyclophilin-type PPIase family. In terms of tissue distribution, ubiquitous. Lower levels of expression in roots.

The protein resides in the plastid. It is found in the chloroplast thylakoid. It carries out the reaction [protein]-peptidylproline (omega=180) = [protein]-peptidylproline (omega=0). Functionally, PPIases accelerate the folding of proteins. It catalyzes the cis-trans isomerization of proline imidic peptide bonds in oligopeptides. In Arabidopsis thaliana (Mouse-ear cress), this protein is Peptidyl-prolyl cis-trans isomerase CYP26-2, chloroplastic (CYP26-2).